A 211-amino-acid chain; its full sequence is SsrA-binding protein (211 aa).

Disordered stretches follow at residues 1–20 (MHRR…PERS) and 170–211 (RLRR…RHEN). The span at 177–187 (QRNTQRSVTPR) shows a compositional bias: polar residues.

The protein belongs to the SmpB family.

It is found in the cytoplasm. Its function is as follows. Required for rescue of stalled ribosomes mediated by trans-translation. Binds to transfer-messenger RNA (tmRNA), required for stable association of tmRNA with ribosomes. tmRNA and SmpB together mimic tRNA shape, replacing the anticodon stem-loop with SmpB. tmRNA is encoded by the ssrA gene; the 2 termini fold to resemble tRNA(Ala) and it encodes a 'tag peptide', a short internal open reading frame. During trans-translation Ala-aminoacylated tmRNA acts like a tRNA, entering the A-site of stalled ribosomes, displacing the stalled mRNA. The ribosome then switches to translate the ORF on the tmRNA; the nascent peptide is terminated with the 'tag peptide' encoded by the tmRNA and targeted for degradation. The ribosome is freed to recommence translation, which seems to be the essential function of trans-translation. The chain is SsrA-binding protein from Tropheryma whipplei (strain TW08/27) (Whipple's bacillus).